Here is a 915-residue protein sequence, read N- to C-terminus: Metabotropic glutamate receptor 7 (915 aa).

A signal peptide spans 1-34; it reads MVQLGKLLRVLTLMKFPCCVLEVLLCVLAAAARG. Residues 35-590 lie on the Extracellular side of the membrane; the sequence is QEMYAPHSIR…IIKLEWHSPW (556 aa). The cysteines at positions 67 and 109 are disulfide-linked. The N-linked (GlcNAc...) asparagine glycan is linked to asparagine 98. L-glutamate-binding positions include serine 159, 180-182, tyrosine 230, and aspartate 314; that span reads AST. 7 cysteine pairs are disulfide-bonded: cysteine 249/cysteine 541, cysteine 374/cysteine 390, cysteine 430/cysteine 437, cysteine 523/cysteine 542, cysteine 527/cysteine 545, cysteine 548/cysteine 560, and cysteine 563/cysteine 576. Position 407 (lysine 407) interacts with L-glutamate. Asparagine 458 and asparagine 486 each carry an N-linked (GlcNAc...) asparagine glycan. The N-linked (GlcNAc...) asparagine glycan is linked to asparagine 572. The chain crosses the membrane as a helical span at residues 591–615; sequence AVIPVFLAMLGIIATIFVMATFIRY. Topologically, residues 616-627 are cytoplasmic; the sequence is NDTPIVRASGRE. A helical membrane pass occupies residues 628-648; the sequence is LSYVLLTGIFLCYIITFLMIA. The Extracellular segment spans residues 649-654; the sequence is KPDVAV. The helical transmembrane segment at 655-675 threads the bilayer; that stretch reads CSFRRVFLGLGMCISYAALLT. Residues 676–702 lie on the Cytoplasmic side of the membrane; it reads KTNRIYRIFEQGKKSVTAPRLISPTSQ. A helical membrane pass occupies residues 703 to 723; sequence LAITSSLISVQLLGVFIWFGV. Topologically, residues 724–753 are extracellular; sequence DPPNIIIDYDEHKTMNPEQARGVLKCDITD. Residues 754–775 form a helical membrane-spanning segment; it reads LQIICSLGYSILLMVTCTVYAI. Over 776 to 788 the chain is Cytoplasmic; sequence KTRGVPENFNEAK. A helical transmembrane segment spans residues 789-810; that stretch reads PIGFTMYTTCIVWLAFIPIFFG. Residues 811-825 are Extracellular-facing; sequence TAQSAEKLYIQTTTL. Residues 826 to 850 form a helical membrane-spanning segment; it reads TISMNLSASVALGMLYMPKVYIIIF. The Cytoplasmic segment spans residues 851–915; sequence HPELNVQKRK…KYVSYNNLVI (65 aa). Positions 874–895 are disordered; sequence SRLSHKPSDRPNGEAKTELCEN. The segment covering 879 to 892 has biased composition (basic and acidic residues); that stretch reads KPSDRPNGEAKTEL. Residue serine 900 is modified to Phosphoserine.

Belongs to the G-protein coupled receptor 3 family. In terms of assembly, homodimer. Interacts with PICK1.

The protein resides in the cell membrane. Its function is as follows. G-protein coupled receptor activated by glutamate that regulates axon outgrowth through the MAPK-cAMP-PKA signaling pathway during neuronal development. Ligand binding causes a conformation change that triggers signaling via guanine nucleotide-binding proteins (G proteins) and modulates the activity of downstream effectors, such as adenylate cyclase that it inhibits. The chain is Metabotropic glutamate receptor 7 (Grm7) from Mus musculus (Mouse).